A 180-amino-acid chain; its full sequence is Large ribosomal subunit protein uL5 (180 aa).

This sequence belongs to the universal ribosomal protein uL5 family. In terms of assembly, part of the 50S ribosomal subunit; part of the 5S rRNA/L5/L18/L25 subcomplex. Contacts the 5S rRNA and the P site tRNA. Forms a bridge to the 30S subunit in the 70S ribosome.

In terms of biological role, this is one of the proteins that bind and probably mediate the attachment of the 5S RNA into the large ribosomal subunit, where it forms part of the central protuberance. In the 70S ribosome it contacts protein S13 of the 30S subunit (bridge B1b), connecting the 2 subunits; this bridge is implicated in subunit movement. Contacts the P site tRNA; the 5S rRNA and some of its associated proteins might help stabilize positioning of ribosome-bound tRNAs. The protein is Large ribosomal subunit protein uL5 of Streptococcus suis (strain 05ZYH33).